The sequence spans 331 residues: Protein C10 (331 aa).

This sequence belongs to the poxviridae C4/C10 protein family.

In Vaccinia virus (strain Western Reserve) (VACV), this protein is Protein C10.